The sequence spans 245 residues: Phosducin (245 aa).

The tract at residues 1–67 is disordered; that stretch reads MEEARRQSLE…SRDDKDSKER (67 aa). In terms of domain architecture, Phosducin spans 1–241; that stretch reads MEEARRQSLE…IHALEQTSME (241 aa). Residues 58-67 show a composition bias toward basic and acidic residues; that stretch reads SRDDKDSKER. Residue Ser-73 is modified to Phosphoserine; by PKA. The thioredoxin fold stretch occupies residues 111-245; that stretch reads YGFVYELETG…EQTSMEEDVE (135 aa).

Belongs to the phosducin family. Forms a complex with the beta and gamma subunits of the GTP-binding protein, transducin. Interacts with CRX. In terms of processing, light-induced changes in cyclic nucleotide levels modulate the phosphorylation of this protein by cAMP kinase.

The protein resides in the cytoplasm. The protein localises to the cytosol. It is found in the nucleus. Its subcellular location is the cell projection. It localises to the cilium. The protein resides in the photoreceptor outer segment. The protein localises to the photoreceptor inner segment. Its function is as follows. May participate in the regulation of visual phototransduction or in the integration of photoreceptor metabolism. Inhibits the transcriptional activation activity of the cone-rod homeobox CRX. In Equus caballus (Horse), this protein is Phosducin (PDC).